Reading from the N-terminus, the 258-residue chain is Snake venom serine protease 2 (258 aa).

Residues 1 to 18 form the signal peptide; that stretch reads MVLIRVLANLLILQLSYA. A propeptide spanning residues 19 to 24 is cleaved from the precursor; it reads QKSSEL. A Peptidase S1 domain is found at 25–249; that stretch reads VFGGRPCNIN…YNDWVQSIIA (225 aa). 6 disulfides stabilise this stretch: C31/C163, C50/C66, C98/C256, C142/C210, C174/C189, and C200/C225. A glycan (N-linked (GlcNAc...) asparagine) is linked at N44. Catalysis depends on charge relay system residues H65 and D110. N-linked (GlcNAc...) asparagine glycans are attached at residues N122 and N185. The active-site Charge relay system is S204.

The protein belongs to the peptidase S1 family. Snake venom subfamily. Monomer. As to expression, expressed by the venom gland.

It is found in the secreted. With respect to regulation, inhibited by PMSF at 2 mM concentration but not by EDTA. In terms of biological role, snake venom serine protease that may act in the hemostasis system of the prey. Has weak fibrinogen clotting activity. Possesses amidolysis activity towards S-2251 (substrate for plasmin) but has no hydrolytic activity with S-2302 (plasma kallikrein substrate) or S-2238 (thrombin substrate). The polypeptide is Snake venom serine protease 2 (Protobothrops jerdonii (Jerdon's pitviper)).